Here is a 902-residue protein sequence, read N- to C-terminus: Gamma-tubulin complex component 2 (902 aa).

Tyr83 bears the Phosphotyrosine mark. A disordered region spans residues 874-902; sequence AERSQKATPQVPVLRGPPAPAPRVAVTAQ.

It belongs to the TUBGCP family. As to quaternary structure, component of the gamma-tubulin ring complex (gTuRC) consisting of TUBGCP2, TUBGCP3, TUBGCP4, TUBGCP5 and TUBGCP6 and gamma-tubulin TUBG1 or TUBG2. TUBGCP2, TUBGCP3, TUBGCP4, TUBGCP5 and TUBGCP6 assemble in a 5:5:2:1:1 stoichiometry; each is associated with a gamma-tubulin, thereby arranging 14 gamma-tubulins in a helical manner. Gamma-tubulin at the first position is blocked by TUBGCP3 at the last position, allowing 13 protafilaments to grow into a microtubule. The gTuRC (via TUBGCP3 and TUBGCP6) interacts with ACTB and MZT1; the interactions form a luminal bridge that stabilizes the initial structure during complex assembly. The gTuRC (via TUBGCP2) interacts with MZT2A/MZT2B and CDK5RAP2 (via CM1 motif); the interactions play a role in gTuRC activation. Interacts with ATF5; the ATF5:PCNT:polyglutamylated tubulin (PGT) tripartite unites the mother centriole and the pericentriolar material (PCM) in the centrosome. As to expression, ubiquitously expressed.

It is found in the cytoplasm. It localises to the cytoskeleton. The protein localises to the microtubule organizing center. The protein resides in the centrosome. Component of the gamma-tubulin ring complex (gTuRC) which mediates microtubule nucleation. The gTuRC regulates the minus-end nucleation of alpha-beta tubulin heterodimers that grow into microtubule protafilaments, a critical step in centrosome duplication and spindle formation. Plays a role in neuronal migration. This is Gamma-tubulin complex component 2 (TUBGCP2) from Homo sapiens (Human).